The sequence spans 338 residues: MSIRPATHAGSWYSNRAQELSQQLHTYLIKSTLKGPIHNARIIICPHAGYRYCGPTMAYSYASLDLNRNVKRIFILGPSHHIYFKNQILVSAFSELETPLGNLKVDTDLCKTLIQKEYPENGKKLFKPMDHDTDMAEHSLEMQLPMLVETLKWREISLDTVKVFPMMVSHNSVDVDRCIGNILSEYIKDPNNLFIVSSDFCHWGRRFQYTGYVGSKEELNDAIQEETEVEMLTARSKLSHHQVPIWQSIEIMDRYAMKTLSDTPNGERYDAWKQYLEITGNTICGEKPISVILSALSKIRDAGPSGIKFQWPNYSQSSHVTSIDDSSVSYASGYVTIG.

Belongs to the MEMO1 family.

The protein resides in the cytoplasm. Its subcellular location is the nucleus. Plays a role in haploid invasive growth under conditions of nutrient insufficiency, suggesting that the function of the MEMO1 family in cell motility/invasion is conserved across species. This chain is MEMO1 family protein MHO1, found in Saccharomyces cerevisiae (strain ATCC 204508 / S288c) (Baker's yeast).